We begin with the raw amino-acid sequence, 202 residues long: Probable cobalt-precorrin-6B C(15)-methyltransferase (decarboxylating) (202 aa).

Residues threonine 29, 53 to 57 (GCGSG), aspartate 77, and valine 106 each bind S-adenosyl-L-methionine.

The protein belongs to the methyltransferase superfamily. Archaeal-type CbiT family.

The catalysed reaction is Co-precorrin-6B + S-adenosyl-L-methionine = Co-precorrin-7 + S-adenosyl-L-homocysteine + CO2. Its pathway is cofactor biosynthesis; adenosylcobalamin biosynthesis; cob(II)yrinate a,c-diamide from sirohydrochlorin (anaerobic route): step 8/10. Functionally, catalyzes the methylation of C-15 in cobalt-precorrin-6B followed by the decarboxylation of C-12 to form cobalt-precorrin-7. This is Probable cobalt-precorrin-6B C(15)-methyltransferase (decarboxylating) from Thermoplasma acidophilum (strain ATCC 25905 / DSM 1728 / JCM 9062 / NBRC 15155 / AMRC-C165).